A 662-amino-acid polypeptide reads, in one-letter code: Hypoxia-inducible factor 3-alpha (662 aa).

Residues 1-25 are disordered; that stretch reads MDWDQDRSSTELRKEKSRDAARSRR. Residues 12-65 form the bHLH domain; the sequence is LRKEKSRDAARSRRSQETEVLYQLAHTLPFARGVSAHLDKASIMRLTISYLRMH. Residues 75-98 are nuclear localization signal; the sequence is QVRKEGEPLDACYLKALEGFVMVL. 2 consecutive PAS domains span residues 80 to 150 and 225 to 295; these read GEPL…PSLS and PHPA…LSKG. Residues 228 to 272 are nuclear export signal; sequence ASLEPPLGRGAFLSRHSLDMKFTYCDERIAEVAGYSPDDLIGCSA. The tract at residues 352 to 379 is disordered; it reads EQTEQHTRRPPQLGTSSKKGIPGNSLDP. The short motif at 410-413 is the LRRLL element; that stretch reads LRRL. Disordered stretches follow at residues 417 to 445 and 459 to 480; these read ILDG…ADLP and STAR…PDTP. The span at 421–433 shows a compositional bias: low complexity; that stretch reads PPTAATPSTPQAA. Residues 448–581 form an ODD region; sequence LAVGLENAHR…SEDKGLELLE (134 aa). Residues 450–501 are NTAD; the sequence is VGLENAHRLSTARKNKTMETDLDIAQDPDTPDLEMLAPYISMDDDFQLNSSE. Residue K463 forms a Glycyl lysine isopeptide (Lys-Gly) (interchain with G-Cter in ubiquitin) linkage. The segment covering 469–480 has biased composition (acidic residues); the sequence is TDLDIAQDPDTP. The short motif at 485 to 492 is the LAPYISMD element; that stretch reads LAPYISMD. 4-hydroxyproline is present on P487. The tract at residues 500–595 is disordered; sequence SEQLPKVHRR…KRSPRLEPGS (96 aa). The span at 505–521 shows a compositional bias: basic residues; the sequence is KVHRRPPRTARRPRARS. A Glycyl lysine isopeptide (Lys-Gly) (interchain with G-Cter in ubiquitin) cross-link involves residue K565. Over residues 572 to 584 the composition is skewed to basic and acidic residues; sequence SEDKGLELLETKP.

As to quaternary structure, interacts with ARNT, BAD, BCL2L2, EPAS1, HIF1A, MCL1 and VHL. In terms of processing, in normoxia, hydroxylated on Pro-487 in the oxygen-dependent degradation domain (ODD) by PHD. The hydroxylated proline promotes interaction with VHL, initiating rapid ubiquitination and subsequent proteasomal degradation. Post-translationally, ubiquitinated; ubiquitination occurs in a VHL- and oxygen-dependent pathway and subsequently targeted for proteasomal degradation. Expressed in the perivenous zone of the liver. Expressed in all tissues examined during normoxia. Expressed in brain and lung. Expressed in periportal and perivenous hepatocytes and in endothelial cells of the central vein (at protein level). Highest expression seen in the cerebral cortex, hippocampus, and lung. Low expression in myocardial tissue and liver.

The protein resides in the nucleus. The protein localises to the cytoplasm. Its subcellular location is the nucleus speckle. It localises to the mitochondrion. Its function is as follows. Acts as a transcriptional regulator in adaptive response to low oxygen tension. Attenuates the ability of transcription factor HIF1A, EPAS1 and the HIF1A-ARNT complex to bind to hypoxia-responsive elements (HRE) located within the enhancer/promoter of hypoxia-inducible target genes and hence inhibits HRE-driven transcriptional activation. Functions as an inhibitor of angiogenesis in hypoxic cells of the cornea. Plays a role in the development of the cardiorespiratory system. May also be involved in apoptosis. May act as a tumor suppressor. This chain is Hypoxia-inducible factor 3-alpha, found in Rattus norvegicus (Rat).